Here is a 535-residue protein sequence, read N- to C-terminus: 4-hydroxy-3-methylbut-2-enyl diphosphate reductase, apicoplast (535 aa).

Cys-231 is a binding site for [4Fe-4S] cluster. Positions 260 and 293 each coordinate (2E)-4-hydroxy-3-methylbut-2-enyl diphosphate. 2 residues coordinate dimethylallyl diphosphate: His-260 and His-293. 2 residues coordinate isopentenyl diphosphate: His-260 and His-293. Residue Cys-315 participates in [4Fe-4S] cluster binding. His-343 is a (2E)-4-hydroxy-3-methylbut-2-enyl diphosphate binding site. His-343 contacts dimethylallyl diphosphate. His-343 provides a ligand contact to isopentenyl diphosphate. The Proton donor role is filled by Glu-345. Thr-383 is a (2E)-4-hydroxy-3-methylbut-2-enyl diphosphate binding site. Cys-413 provides a ligand contact to [4Fe-4S] cluster. (2E)-4-hydroxy-3-methylbut-2-enyl diphosphate-binding residues include Ser-441, Ser-442, Asn-443, and Ser-485. Dimethylallyl diphosphate contacts are provided by Ser-441, Ser-442, Asn-443, and Ser-485. 4 residues coordinate isopentenyl diphosphate: Ser-441, Ser-442, Asn-443, and Ser-485.

The protein belongs to the IspH family. Interacts with Fd/ferredoxin. [4Fe-4S] cluster is required as a cofactor.

It localises to the plastid. It is found in the apicoplast. The catalysed reaction is dimethylallyl diphosphate + 2 oxidized [2Fe-2S]-[ferredoxin] + H2O = (2E)-4-hydroxy-3-methylbut-2-enyl diphosphate + 2 reduced [2Fe-2S]-[ferredoxin] + 2 H(+). It carries out the reaction isopentenyl diphosphate + 2 oxidized [2Fe-2S]-[ferredoxin] + H2O = (2E)-4-hydroxy-3-methylbut-2-enyl diphosphate + 2 reduced [2Fe-2S]-[ferredoxin] + 2 H(+). It participates in isoprenoid biosynthesis; dimethylallyl diphosphate biosynthesis; dimethylallyl diphosphate from (2E)-4-hydroxy-3-methylbutenyl diphosphate: step 1/1. Its pathway is isoprenoid biosynthesis; isopentenyl diphosphate biosynthesis via DXP pathway; isopentenyl diphosphate from 1-deoxy-D-xylulose 5-phosphate: step 6/6. Its function is as follows. Catalyzes the conversion of 1-hydroxy-2-methyl-2-(E)-butenyl 4-diphosphate (HMBPP) into a mixture of isopentenyl diphosphate (IPP) and dimethylallyl diphosphate (DMAPP). Acts in the terminal step of the DOXP/MEP pathway for isoprenoid precursor biosynthesis. This chain is 4-hydroxy-3-methylbut-2-enyl diphosphate reductase, apicoplast, found in Plasmodium falciparum (isolate 3D7).